The primary structure comprises 139 residues: Peptide methionine sulfoxide reductase MsrB (139 aa).

Residues 8-130 form the MsrB domain; that stretch reads EREWQRELSP…NSASLQLKTD (123 aa). Zn(2+)-binding residues include C47, C50, C96, and C99. Residue C119 is the Nucleophile of the active site.

Belongs to the MsrB Met sulfoxide reductase family. Zn(2+) is required as a cofactor.

It catalyses the reaction L-methionyl-[protein] + [thioredoxin]-disulfide + H2O = L-methionyl-(R)-S-oxide-[protein] + [thioredoxin]-dithiol. This chain is Peptide methionine sulfoxide reductase MsrB, found in Acinetobacter baylyi (strain ATCC 33305 / BD413 / ADP1).